A 365-amino-acid polypeptide reads, in one-letter code: UDP-N-acetylglucosamine--N-acetylmuramyl-(pentapeptide) pyrophosphoryl-undecaprenol N-acetylglucosamine transferase (365 aa).

Residues 13-15 (TGG), Asn-125, Arg-165, Ser-192, and Gln-293 each bind UDP-N-acetyl-alpha-D-glucosamine.

It belongs to the glycosyltransferase 28 family. MurG subfamily.

The protein resides in the cell inner membrane. The enzyme catalyses di-trans,octa-cis-undecaprenyl diphospho-N-acetyl-alpha-D-muramoyl-L-alanyl-D-glutamyl-meso-2,6-diaminopimeloyl-D-alanyl-D-alanine + UDP-N-acetyl-alpha-D-glucosamine = di-trans,octa-cis-undecaprenyl diphospho-[N-acetyl-alpha-D-glucosaminyl-(1-&gt;4)]-N-acetyl-alpha-D-muramoyl-L-alanyl-D-glutamyl-meso-2,6-diaminopimeloyl-D-alanyl-D-alanine + UDP + H(+). The protein operates within cell wall biogenesis; peptidoglycan biosynthesis. Cell wall formation. Catalyzes the transfer of a GlcNAc subunit on undecaprenyl-pyrophosphoryl-MurNAc-pentapeptide (lipid intermediate I) to form undecaprenyl-pyrophosphoryl-MurNAc-(pentapeptide)GlcNAc (lipid intermediate II). This is UDP-N-acetylglucosamine--N-acetylmuramyl-(pentapeptide) pyrophosphoryl-undecaprenol N-acetylglucosamine transferase from Ruegeria sp. (strain TM1040) (Silicibacter sp.).